A 340-amino-acid polypeptide reads, in one-letter code: Adenosine deaminase (340 aa).

Zn(2+) is bound by residues His-15 and His-17. Residues His-17, Asp-19, and Gly-172 each contribute to the substrate site. Position 199 (His-199) interacts with Zn(2+). Glu-202 functions as the Proton donor in the catalytic mechanism. Asp-279 contributes to the Zn(2+) binding site.

It belongs to the metallo-dependent hydrolases superfamily. Adenosine and AMP deaminases family. Adenosine deaminase subfamily. The cofactor is Zn(2+).

The enzyme catalyses adenosine + H2O + H(+) = inosine + NH4(+). It carries out the reaction 2'-deoxyadenosine + H2O + H(+) = 2'-deoxyinosine + NH4(+). Catalyzes the hydrolytic deamination of adenosine and 2-deoxyadenosine. The protein is Adenosine deaminase of Streptococcus agalactiae serotype Ia (strain ATCC 27591 / A909 / CDC SS700).